The sequence spans 224 residues: Cytidylate kinase (224 aa).

Residue 11–19 (GPAAAGKST) coordinates ATP.

Belongs to the cytidylate kinase family. Type 1 subfamily.

It localises to the cytoplasm. It catalyses the reaction CMP + ATP = CDP + ADP. The catalysed reaction is dCMP + ATP = dCDP + ADP. This is Cytidylate kinase from Geobacillus thermodenitrificans (strain NG80-2).